Here is a 512-residue protein sequence, read N- to C-terminus: Cobyric acid synthase (512 aa).

A GATase cobBQ-type domain is found at 251-451 (ALDITVIRLP…IHGLFDSANF (201 aa)). The active-site Nucleophile is cysteine 332. The active site involves histidine 443.

Belongs to the CobB/CobQ family. CobQ subfamily.

The protein operates within cofactor biosynthesis; adenosylcobalamin biosynthesis. Functionally, catalyzes amidations at positions B, D, E, and G on adenosylcobyrinic A,C-diamide. NH(2) groups are provided by glutamine, and one molecule of ATP is hydrogenolyzed for each amidation. This Photorhabdus laumondii subsp. laumondii (strain DSM 15139 / CIP 105565 / TT01) (Photorhabdus luminescens subsp. laumondii) protein is Cobyric acid synthase.